The chain runs to 180 residues: ATP-dependent protease subunit HslV (180 aa).

The active site involves T5. Residues G165, C168, and T171 each contribute to the Na(+) site.

This sequence belongs to the peptidase T1B family. HslV subfamily. In terms of assembly, a double ring-shaped homohexamer of HslV is capped on each side by a ring-shaped HslU homohexamer. The assembly of the HslU/HslV complex is dependent on binding of ATP.

The protein resides in the cytoplasm. It carries out the reaction ATP-dependent cleavage of peptide bonds with broad specificity.. Its activity is regulated as follows. Allosterically activated by HslU binding. In terms of biological role, protease subunit of a proteasome-like degradation complex believed to be a general protein degrading machinery. This is ATP-dependent protease subunit HslV from Helicobacter pylori (strain HPAG1).